The chain runs to 465 residues: A-type ATP synthase subunit B (465 aa).

The protein belongs to the ATPase alpha/beta chains family. In terms of assembly, has multiple subunits with at least A(3), B(3), C, D, E, F, H, I and proteolipid K(x).

The protein localises to the cell membrane. Its function is as follows. Component of the A-type ATP synthase that produces ATP from ADP in the presence of a proton gradient across the membrane. The B chain is a regulatory subunit. The protein is A-type ATP synthase subunit B of Thermococcus kodakarensis (strain ATCC BAA-918 / JCM 12380 / KOD1) (Pyrococcus kodakaraensis (strain KOD1)).